Reading from the N-terminus, the 182-residue chain is Crossover junction endodeoxyribonuclease RuvC (182 aa).

Catalysis depends on residues aspartate 7, glutamate 69, and aspartate 141. Residues aspartate 7, glutamate 69, and aspartate 141 each coordinate Mg(2+).

Belongs to the RuvC family. Homodimer which binds Holliday junction (HJ) DNA. The HJ becomes 2-fold symmetrical on binding to RuvC with unstacked arms; it has a different conformation from HJ DNA in complex with RuvA. In the full resolvosome a probable DNA-RuvA(4)-RuvB(12)-RuvC(2) complex forms which resolves the HJ. Mg(2+) is required as a cofactor.

The protein localises to the cytoplasm. The catalysed reaction is Endonucleolytic cleavage at a junction such as a reciprocal single-stranded crossover between two homologous DNA duplexes (Holliday junction).. Its function is as follows. The RuvA-RuvB-RuvC complex processes Holliday junction (HJ) DNA during genetic recombination and DNA repair. Endonuclease that resolves HJ intermediates. Cleaves cruciform DNA by making single-stranded nicks across the HJ at symmetrical positions within the homologous arms, yielding a 5'-phosphate and a 3'-hydroxyl group; requires a central core of homology in the junction. The consensus cleavage sequence is 5'-(A/T)TT(C/G)-3'. Cleavage occurs on the 3'-side of the TT dinucleotide at the point of strand exchange. HJ branch migration catalyzed by RuvA-RuvB allows RuvC to scan DNA until it finds its consensus sequence, where it cleaves and resolves the cruciform DNA. The protein is Crossover junction endodeoxyribonuclease RuvC of Paracidovorax citrulli (strain AAC00-1) (Acidovorax citrulli).